The primary structure comprises 1857 residues: Peripheral-type benzodiazepine receptor-associated protein 1 (1857 aa).

Disordered regions lie at residues 1–103, 284–321, and 565–629; these read MEQL…RPED, QRET…QEDA, and PKDL…DTAS. The segment covering 55–67 has biased composition (basic and acidic residues); it reads LRSEESSKPKGDG. The segment covering 87–96 has biased composition (polar residues); that stretch reads LGQQASSSGP. Residues 289-298 are compositionally biased toward pro residues; the sequence is PLPPSWPPGP. 2 stretches are compositionally biased toward low complexity: residues 299–316 and 603–616; these read ALQA…GEAT and SLSN…IHNS. Positions 653–720 constitute an SH3 1 domain; sequence ARIQVFLARY…PSNFVERVSD (68 aa). Positions 729-789 are disordered; the sequence is PELADLSHSS…PSPEGLGEPP (61 aa). A compositionally biased stretch (low complexity) spans 755–764; that stretch reads GGQSSVGRSQ. Fibronectin type-III domains lie at 791–882, 884–976, and 981–1081; these read VPYP…ARAG, VPSQ…TLPA, and APLD…LAPA. 3 disordered regions span residues 1083 to 1311, 1330 to 1479, and 1501 to 1601; these read LPAR…SDEE, FSIP…CSRG, and YDSE…RGVR. Low complexity predominate over residues 1098-1116; it reads ARAPLASASPGPGDPSSPL. A compositionally biased stretch (basic and acidic residues) spans 1138–1147; that stretch reads EMAKGSHEDP. Residues 1201-1218 show a composition bias toward polar residues; sequence ASSSTQGARAQQAPNTEM. Residues 1259–1274 are compositionally biased toward acidic residues; that stretch reads DIQEEEEEEEEEEEEE. Residues 1278-1292 show a composition bias toward polar residues; it reads RTCSFQKQVAGNSIR. The span at 1333–1346 shows a compositional bias: acidic residues; that stretch reads PEEEEEEEEDEEEE. Composition is skewed to basic and acidic residues over residues 1420–1429 and 1554–1586; these read RPPDPREHCS and AWEK…EARG. In terms of domain architecture, SH3 2 spans 1625–1693; sequence LPVRIFVALF…PCNMVAEVAV (69 aa). Disordered regions lie at residues 1723 to 1761 and 1823 to 1857; these read VYST…VPSA and SNFL…RVQC. An SH3 3 domain is found at 1764–1831; the sequence is KAPHSMVAAF…PSNFLEGPGP (68 aa).

This sequence belongs to the RIMBP family. As to quaternary structure, interacts with RIMS1 and RIMS2. Interacts with TSPO. Interacts with CACNA1A. As to expression, predominantly expressed in brain, pituitary gland and thymus in adults. In adult brain, highest expression found in temporal lobe and the putamen, followed by amygdala, caudate nucleus, cerebral cortex, occipital and frontal lobe. A high expression level is also observed in fetal tissues like brain, heart, kidney and thymus.

Its subcellular location is the cytoplasm. It is found in the mitochondrion. Functionally, required for synaptic transmission regulation. It probably controls the recruitement of voltage-gated calcium channels to the presynaptic membrane, and modulates neurotransmitter release. The chain is Peripheral-type benzodiazepine receptor-associated protein 1 from Homo sapiens (Human).